We begin with the raw amino-acid sequence, 110 residues long: Large ribosomal subunit protein uL22 (110 aa).

This sequence belongs to the universal ribosomal protein uL22 family. As to quaternary structure, part of the 50S ribosomal subunit.

Functionally, this protein binds specifically to 23S rRNA; its binding is stimulated by other ribosomal proteins, e.g. L4, L17, and L20. It is important during the early stages of 50S assembly. It makes multiple contacts with different domains of the 23S rRNA in the assembled 50S subunit and ribosome. The globular domain of the protein is located near the polypeptide exit tunnel on the outside of the subunit, while an extended beta-hairpin is found that lines the wall of the exit tunnel in the center of the 70S ribosome. This Campylobacter fetus subsp. fetus (strain 82-40) protein is Large ribosomal subunit protein uL22.